A 530-amino-acid polypeptide reads, in one-letter code: Trigger factor (530 aa).

The PPIase FKBP-type domain occupies 162 to 243; that stretch reads DDLVTIDLAG…VTKVCEQELP (82 aa). Residues 432 to 530 form a disordered region; sequence NALELDRIQP…KTAAKDDKSK (99 aa). 2 stretches are compositionally biased toward basic and acidic residues: residues 459–478 and 501–512; these read SAEK…EKAP and KVVDAKSDDKPA.

It belongs to the FKBP-type PPIase family. Tig subfamily.

Its subcellular location is the cytoplasm. The catalysed reaction is [protein]-peptidylproline (omega=180) = [protein]-peptidylproline (omega=0). In terms of biological role, involved in protein export. Acts as a chaperone by maintaining the newly synthesized protein in an open conformation. Functions as a peptidyl-prolyl cis-trans isomerase. This Cutibacterium acnes (strain DSM 16379 / KPA171202) (Propionibacterium acnes) protein is Trigger factor.